Consider the following 95-residue polypeptide: Protein TusB (95 aa).

This sequence belongs to the DsrH/TusB family. In terms of assembly, heterohexamer, formed by a dimer of trimers. The hexameric TusBCD complex contains 2 copies each of TusB, TusC and TusD. The TusBCD complex interacts with TusE.

Its subcellular location is the cytoplasm. Its function is as follows. Part of a sulfur-relay system required for 2-thiolation of 5-methylaminomethyl-2-thiouridine (mnm(5)s(2)U) at tRNA wobble positions. This is Protein TusB from Shigella flexneri.